A 489-amino-acid chain; its full sequence is Para-nitrobenzyl esterase (489 aa).

Ser-189 (acyl-ester intermediate) is an active-site residue. Ser-189 carries the post-translational modification Phosphoserine. Catalysis depends on charge relay system residues Glu-310 and His-399.

Belongs to the type-B carboxylesterase/lipase family. As to quaternary structure, monomer.

Its function is as follows. Catalyzes hydrolysis of several beta-lactam antibiotic PNB esters to the corresponding free acid and PNB alcohol. This Bacillus subtilis (strain 168) protein is Para-nitrobenzyl esterase (pnbA).